Here is a 22-residue protein sequence, read N- to C-terminus: Caerin-3.4 (22 aa).

Position 22 is a lysine amide (Lys22).

As to expression, expressed by the skin parotoid and/or rostral glands.

The protein resides in the secreted. Functionally, antibacterial peptide, that adopts an alpha helical conformation which can disrupt bacterial membranes. Each caerin displays a different antimicrobial specificity. In Ranoidea caerulea (Green tree frog), this protein is Caerin-3.4.